Reading from the N-terminus, the 155-residue chain is Endoribonuclease YbeY (155 aa).

Zn(2+) contacts are provided by H120, H124, and H130.

This sequence belongs to the endoribonuclease YbeY family. Zn(2+) serves as cofactor.

Its subcellular location is the cytoplasm. Its function is as follows. Single strand-specific metallo-endoribonuclease involved in late-stage 70S ribosome quality control and in maturation of the 3' terminus of the 16S rRNA. The sequence is that of Endoribonuclease YbeY from Staphylococcus epidermidis (strain ATCC 35984 / DSM 28319 / BCRC 17069 / CCUG 31568 / BM 3577 / RP62A).